The chain runs to 942 residues: UvrABC system protein A (942 aa).

32-39 (GLSGSGKS) contributes to the ATP binding site. Residues 251 to 278 (CPVCGFTVPELEPRLFSFNAPFGSCPTC) form a C4-type zinc finger. 2 ABC transporter domains span residues 308–589 (WNPI…KKSI) and 609–937 (GNGR…HYLK). Residue 641–648 (GVSGSGKS) coordinates ATP. The segment at 740-766 (CEACSGDGIIKIEMHFLPDVYVPCEVC) adopts a C4-type zinc-finger fold.

The protein belongs to the ABC transporter superfamily. UvrA family. In terms of assembly, forms a heterotetramer with UvrB during the search for lesions.

The protein localises to the cytoplasm. The UvrABC repair system catalyzes the recognition and processing of DNA lesions. UvrA is an ATPase and a DNA-binding protein. A damage recognition complex composed of 2 UvrA and 2 UvrB subunits scans DNA for abnormalities. When the presence of a lesion has been verified by UvrB, the UvrA molecules dissociate. This chain is UvrABC system protein A, found in Streptococcus pyogenes serotype M1.